A 265-amino-acid polypeptide reads, in one-letter code: MQIRQSVKLKKPLIHYITNPISINDCANMILAAGAKPIMAEHPLEVSEITSVSKSLGVNLGNITDNKMKSMLISGKTAYENKIPQVIDLVGVGCSKLRLDYARKFISECHPNVIKGNMSEIKAIYGIKSSAKGIDVGACDIITEQNFDENIKMIKRLSMETGSVVAATGVVDIISNGTHTYIISNGCEVLSMITGTGCMLTGIIASYISSGNILEGTALAIVLMGICGELSQHVKGTGSFRNELIDNIFSISDDIIIKKIRINSY.

Methionine 39 is a binding site for substrate. Lysine 115 and threonine 168 together coordinate ATP. Glycine 195 contributes to the substrate binding site.

It belongs to the Thz kinase family. The cofactor is Mg(2+).

The catalysed reaction is 5-(2-hydroxyethyl)-4-methylthiazole + ATP = 4-methyl-5-(2-phosphooxyethyl)-thiazole + ADP + H(+). It participates in cofactor biosynthesis; thiamine diphosphate biosynthesis; 4-methyl-5-(2-phosphoethyl)-thiazole from 5-(2-hydroxyethyl)-4-methylthiazole: step 1/1. Catalyzes the phosphorylation of the hydroxyl group of 4-methyl-5-beta-hydroxyethylthiazole (THZ). The polypeptide is Hydroxyethylthiazole kinase 2 (Clostridium botulinum (strain 657 / Type Ba4)).